The chain runs to 520 residues: Keratin, type II cytoskeletal 4 (520 aa).

Residues 1-136 are head; sequence MIARQQCVRG…DPEIQKVRTE (136 aa). Arg13 carries the post-translational modification Omega-N-methylarginine. Positions 137-172 are coil 1A; that stretch reads EREQIKLLNNKFASFIDKVQFLEQQNKVLETKWNLL. Residues 137 to 450 form the IF rod domain; the sequence is EREQIKLLNN…KLLEGEEYRM (314 aa). A linker 1 region spans residues 173 to 191; the sequence is QQQTTTTSSKNLEPLFETY. The interval 192–284 is coil 1B; the sequence is LSVLRKQLDT…LYDAELSQMQ (93 aa). The interval 285 to 307 is linker 12; sequence THVSDTSVVLSMDNNRNLDLDSI. A coil 2 region spans residues 308–447; that stretch reads IAEVRAQYEE…TYRKLLEGEE (140 aa). The tail stretch occupies residues 448–520; it reads YRMSGECQSA…ISTTTLNKRR (73 aa). The disordered stretch occupies residues 500–520; it reads GSVSGSSSSKIISTTTLNKRR. Over residues 503-514 the composition is skewed to low complexity; it reads SGSSSSKIISTT.

The protein belongs to the intermediate filament family. As to quaternary structure, heterotetramer of two type I and two type II keratins. Keratin-4 is generally associated with keratin-13. As to expression, detected in the suprabasal layer of the stratified epithelium of the esophagus, exocervix, vagina, mouth and lingual mucosa, and in cells and cell clusters in the mucosa and serous gland ducts of the esophageal submucosa (at protein level). Expressed widely in the exocervix and esophageal epithelium, with lowest levels detected in the basal cell layer.

The polypeptide is Keratin, type II cytoskeletal 4 (KRT4) (Homo sapiens (Human)).